The following is a 445-amino-acid chain: KICSTOR subunit 2 (445 aa).

This sequence belongs to the KICS2 family. Part of the KICSTOR complex composed of KPTN, ITFG2, KICS2 and SZT2. SZT2 probably serves as a link between the other three proteins in the KICSTOR complex and may mediate the direct interaction with the GATOR complex via GATOR1. The KICSTOR complex interacts directly with the GATOR1 complex and most probably indirectly with the GATOR2 complex in an amino acid-independent manner.

The protein localises to the lysosome membrane. As part of the KICSTOR complex functions in the amino acid-sensing branch of the TORC1 signaling pathway. Recruits, in an amino acid-independent manner, the GATOR1 complex to the lysosomal membranes and allows its interaction with GATOR2 and the RAG GTPases. Functions upstream of the RAG GTPases and is required to negatively regulate mTORC1 signaling in absence of amino acids. In absence of the KICSTOR complex mTORC1 is constitutively localized to the lysosome and activated. The KICSTOR complex is also probably involved in the regulation of mTORC1 by glucose. In Mus musculus (Mouse), this protein is KICSTOR subunit 2.